Consider the following 157-residue polypeptide: NADPH-dependent 7-cyano-7-deazaguanine reductase (157 aa).

Cys-55 serves as the catalytic Thioimide intermediate. The active-site Proton donor is Asp-62. Residues 77 to 79 (VES) and 96 to 97 (HE) each bind substrate.

It belongs to the GTP cyclohydrolase I family. QueF type 1 subfamily.

The protein localises to the cytoplasm. It catalyses the reaction 7-aminomethyl-7-carbaguanine + 2 NADP(+) = 7-cyano-7-deazaguanine + 2 NADPH + 3 H(+). The protein operates within tRNA modification; tRNA-queuosine biosynthesis. Functionally, catalyzes the NADPH-dependent reduction of 7-cyano-7-deazaguanine (preQ0) to 7-aminomethyl-7-deazaguanine (preQ1). This is NADPH-dependent 7-cyano-7-deazaguanine reductase from Neisseria meningitidis serogroup A / serotype 4A (strain DSM 15465 / Z2491).